Here is a 678-residue protein sequence, read N- to C-terminus: Secretin ExeD (678 aa).

Positions 1 to 25 (MINKGKGWRLATVAAALMMAGSAWA) are cleaved as a signal peptide. Positions 26–122 (TEYSASFKNA…VVDETNPGIG (97 aa)) are N0. Residues 124-188 (EMVTRVVPVR…EVVRRVDKAG (65 aa)) are N1. Residues 189 to 264 (DQEVDIIKLK…MVRQLDRDLQ (76 aa)) form an N2 region. An N3 region spans residues 267-348 (GNTRVFYLKY…ELEQVVAKLD (82 aa)). Residues 353–602 (QVLVEAIIVE…VFIRPTILRD (250 aa)) are secretin. Positions 604–678 (NVYSGISSNK…GVQPFVQGNK (75 aa)) are s domain.

The protein belongs to the bacterial secretin family. GSP D subfamily. Forms a cylindrical channel with 15 subunits.

It is found in the cell outer membrane. Functionally, involved in a type II secretion system (T2SS, formerly general secretion pathway, GSP) for the export of proteins. This subunit forms the outer membrane channel. The polypeptide is Secretin ExeD (exeD) (Aeromonas hydrophila).